Reading from the N-terminus, the 318-residue chain is O-glucosyltransferase LpsA (318 aa).

The protein belongs to the glycosyltransferase 90 family.

Its pathway is protein modification; protein glycosylation. Its function is as follows. Involved in lipopolysaccharide core biosynthesis. The sequence is that of O-glucosyltransferase LpsA (lpsA) from Dichelobacter nodosus (Bacteroides nodosus).